The primary structure comprises 307 residues: Taste receptor type 2 member 41 (307 aa).

Residues 1-7 lie on the Extracellular side of the membrane; that stretch reads MQAALTA. The helical transmembrane segment at 8-28 threads the bilayer; it reads FFMLLFSLLSLLGIAANGFIV. At 29–40 the chain is on the cytoplasmic side; sequence LVLGREWLRYGR. A helical transmembrane segment spans residues 41-61; the sequence is LLPLDMILISLGASRFCLQLV. At 62 to 88 the chain is on the extracellular side; sequence GTVHNFYYSAQKVEYSGGLGRQFFHLH. Residues 89-109 traverse the membrane as a helical segment; sequence WHFLNSATFWFCSWLSVLFCV. Topologically, residues 110–129 are cytoplasmic; the sequence is KIANITHPTFLWLKWRFPGW. Residues 130–150 form a helical membrane-spanning segment; the sequence is VPWLLLGSVLISFIITLLFFW. Topologically, residues 151 to 183 are extracellular; sequence VNYPAYQEFLIRKFSVNMTYKWNTRIETYYFPS. N167 carries an N-linked (GlcNAc...) asparagine glycan. The helical transmembrane segment at 184–204 threads the bilayer; sequence LKLVIWSIPFSVFLVSIMLLI. Over 205-234 the chain is Cytoplasmic; the sequence is NSLRRHTQRMQHNGHSLQDPSTQAHTRALK. Residues 235–255 traverse the membrane as a helical segment; the sequence is SLISFLILYALSFLSLIIDAT. Topologically, residues 256-264 are extracellular; that stretch reads KFISMQNDF. A helical transmembrane segment spans residues 265–285; it reads YWPWQIAVYLCISVHPFILIF. Residues 286 to 307 are Cytoplasmic-facing; that stretch reads SNLKLRSVFSQLLLLARGFWVA.

Belongs to the G-protein coupled receptor T2R family.

Its subcellular location is the membrane. Its function is as follows. Receptor that may play a role in the perception of bitterness and is gustducin-linked. May play a role in sensing the chemical composition of the gastrointestinal content. The activity of this receptor may stimulate alpha gustducin, mediate PLC-beta-2 activation and lead to the gating of TRPM5. The polypeptide is Taste receptor type 2 member 41 (TAS2R41) (Pan troglodytes (Chimpanzee)).